The primary structure comprises 273 residues: Tryptase (273 aa).

Positions 1-18 (MLKLLLLTLPLLSSLVHA) are cleaved as a signal peptide. The propeptide at 19 to 28 (APGPAMTREG) is activation peptide. The 242-residue stretch at 29 to 270 (IVGGQEAHGN…YLDWIHHYVP (242 aa)) folds into the Peptidase S1 domain. N-linked (GlcNAc...) asparagine glycosylation occurs at Asn49. Cys57 and Cys73 form a disulfide bridge. Catalysis depends on charge relay system residues His72 and Asp119. Residue Asn130 is glycosylated (N-linked (GlcNAc...) asparagine). Intrachain disulfides connect Cys153–Cys228, Cys186–Cys209, and Cys218–Cys246. The active-site Charge relay system is Ser222.

This sequence belongs to the peptidase S1 family. Tryptase subfamily.

The enzyme catalyses Preferential cleavage: Arg-|-Xaa, Lys-|-Xaa, but with more restricted specificity than trypsin.. Tryptase is the major neutral protease present in mast cells and is secreted upon the coupled activation-degranulation response of this cell type. May play a role in innate immunity. The protein is Tryptase (Tpsab1) of Mus musculus (Mouse).